The primary structure comprises 99 residues: Nucleoid-associated protein EbfC (99 aa).

This sequence belongs to the YbaB/EbfC family. In terms of assembly, homodimer.

It is found in the cytoplasm. Its subcellular location is the nucleoid. Functionally, binds to DNA and alters its conformation. May be involved in regulation of gene expression, nucleoid organization and DNA protection. This is Nucleoid-associated protein EbfC from Borrelia turicatae (strain 91E135).